A 251-amino-acid polypeptide reads, in one-letter code: Aspartate/glutamate leucyltransferase (251 aa).

This sequence belongs to the R-transferase family. Bpt subfamily.

The protein resides in the cytoplasm. The enzyme catalyses N-terminal L-glutamyl-[protein] + L-leucyl-tRNA(Leu) = N-terminal L-leucyl-L-glutamyl-[protein] + tRNA(Leu) + H(+). It carries out the reaction N-terminal L-aspartyl-[protein] + L-leucyl-tRNA(Leu) = N-terminal L-leucyl-L-aspartyl-[protein] + tRNA(Leu) + H(+). Functionally, functions in the N-end rule pathway of protein degradation where it conjugates Leu from its aminoacyl-tRNA to the N-termini of proteins containing an N-terminal aspartate or glutamate. In Nitrosospira multiformis (strain ATCC 25196 / NCIMB 11849 / C 71), this protein is Aspartate/glutamate leucyltransferase.